The chain runs to 304 residues: MKGKEEKEGGARLGTGGGGSPDKSPSAQELKEQGNRLFVGRKYPEAAACYGRAITRNPLVAVYYTNRALCYLKMQQPEQALADCRRALELDGQSVKAHFFLGQCQLEMESYDEAIANLQRAYSLAKEQRLNFGDDIPSALRIAKKKRWNSIEERRIHQESELHSYLTRLIAAERERELEECQRNHEGDEDDGHIRAQQACIEAKHDKYMADMNELFSQVDEKRKKRDIPDYLCGKISFELMREPCITPSGITYDRKDIEEHLQRVGHFDPVTRSPLTQEQLIPNLAMKEVIDAFISENGWVEDY.

Residues 1-10 (MKGKEEKEGG) are compositionally biased toward basic and acidic residues. The disordered stretch occupies residues 1 to 30 (MKGKEEKEGGARLGTGGGGSPDKSPSAQEL). Lysine 2 is covalently cross-linked (Glycyl lysine isopeptide (Lys-Gly) (interchain with G-Cter in ubiquitin)). Positions 11–20 (ARLGTGGGGS) are enriched in gly residues. The residue at position 20 (serine 20) is a Phosphoserine. Lysine 23 participates in a covalent cross-link: Glycyl lysine isopeptide (Lys-Gly) (interchain with G-Cter in ubiquitin). Serine 24 and serine 26 each carry phosphoserine. 3 TPR repeats span residues 27 to 60 (AQELKEQGNRLFVGRKYPEAAACYGRAITRNPLV), 61 to 94 (AVYYTNRALCYLKMQQPEQALADCRRALELDGQS), and 96 to 128 (KAHFFLGQCQLEMESYDEAIANLQRAYSLAKEQ). Residues 102–201 (GQCQLEMESY…GHIRAQQACI (100 aa)) form a required for interaction with MAPK7 region. The segment at 143-197 (AKKKRWNSIEERRIHQESELHSYLTRLIAAERERELEECQRNHEGDEDDGHIRAQ) is required for interaction with and ubiquitination of MYOCD. Residues 144 to 198 (KKKRWNSIEERRIHQESELHSYLTRLIAAERERELEECQRNHEGDEDDGHIRAQQ) form a required for interaction with FOXO1 region. The interval 144 to 304 (KKKRWNSIEE…ISENGWVEDY (161 aa)) is required for ubiquitination of FOXO1. A Phosphoserine modification is found at serine 150. Glycyl lysine isopeptide (Lys-Gly) (interchain with G-Cter in ubiquitin) cross-links involve residues lysine 222 and lysine 256. The 75-residue stretch at 227–301 (DIPDYLCGKI…DAFISENGWV (75 aa)) folds into the U-box domain. The residue at position 274 (serine 274) is a Phosphoserine.

As to quaternary structure, homodimer. Interacts with BAG2, and with the E2 ubiquitin conjugating enzymes UBE2D1, UBE2D2 and UBE2D3. Detected in a ternary complex containing STUB1, HSPA1A and HSPBP1. Part of a complex composed of STUB1/CHIP, VCP/p97, CHRNA3, and UBXN2A that modulates the ubiquitination and endoplasmic reticulum-associated degradation (ERAD) of CHRNA3. Within the complex UBXN2A acts as a scaffold protein required for the interaction of CHRNA3 with VCP/p97, this interaction also inhibits CHRNA3 ubiquitination by STUB1/CHIP and subsequently ERAD. Interacts with MKKS. Interacts with DNAAF4. Interacts (via the U-box domain) with the UBE2V2-UBE2N heterodimer; the complex has a specific 'Lys-63'-linked polyubiquitination activity. Interacts (when monoubiquitinated) with ATXN3. Interacts with UBE2W. Interacts with DNAJB6. Interacts with FLCN and HSP90AA1. Interacts with HSP90. Interacts with UBE2N and UBE2V1. Interacts (via TPR repeats) with HSPA8 (via C-terminus). Interacts (via TPR repeats) with HSPA1A (via C-terminus). Interacts with the non-acetylated form of HSPA1A and HSPA1B. Interacts with SMAD3 and HSP90AB1. Interacts with UBE4B. Interacts with PRMT5. Interacts with MYOCD (via C-terminus). Interacts with FOXO1 (when phosphorylated on 'Ser-250'). Interacts with MAPK7/ERK5; the interaction is enhanced in the presence of IGF1 or MAP2K5 and promotes STUB1/CHIP E3 ligase activity. Interacts with and ubiquitinates ESR1; the interaction is promoted in the absence of estradiol (17-beta-estradiol/E2). Interacts with ESR2. Interacts with and ubiquitinates NFATC3; HSPA1A/HSP70 is required as a co-chaperone. In macrophages, interacts with PAQR3; the interaction promotes PPARG poylubiquitination and STUB1-mediated degradation. Component of the chaperone-assisted selective autophagy (CASA) complex consisting of BAG3, HSPA8/HSC70, HSPB8 and STUB1/CHIP. In terms of processing, auto-ubiquitinated; mediated by UBE2D1 and UBE2D2 and enhanced in the presence of MAP2K5. Monoubiquitinated at Lys-2 following cell stress by UBE2W, promoting the interaction with ATXN3. In terms of tissue distribution, expressed in the adventitia layer of the carotid artery (at protein level). Expressed in the CA1 region of the hippocampus (at protein level). Expressed in the uterus (at protein level).

It is found in the cytoplasm. Its subcellular location is the nucleus. The protein localises to the mitochondrion. It catalyses the reaction S-ubiquitinyl-[E2 ubiquitin-conjugating enzyme]-L-cysteine + [acceptor protein]-L-lysine = [E2 ubiquitin-conjugating enzyme]-L-cysteine + N(6)-ubiquitinyl-[acceptor protein]-L-lysine.. It functions in the pathway protein modification; protein ubiquitination. E3 ubiquitin-protein ligase which targets misfolded chaperone substrates towards proteasomal degradation. Plays a role in the maintenance of mitochondrial morphology and promotes mitophagic removal of dysfunctional mitochondria; thereby acts as a protector against apoptosis in response to cellular stress. Negatively regulates vascular smooth muscle contraction, via degradation of the transcriptional activator MYOCD and subsequent loss of transcription of genes involved in vascular smooth muscle contraction. Promotes survival and proliferation of cardiac smooth muscle cells via ubiquitination and degradation of FOXO1, resulting in subsequent repression of FOXO1-mediated transcription of pro-apoptotic genes. Ubiquitinates ICER-type isoforms of CREM and targets them for proteasomal degradation, thereby acts as a positive effector of MAPK/ERK-mediated inhibition of apoptosis in cardiomyocytes. Inhibits lipopolysaccharide-induced apoptosis and hypertrophy in cardiomyocytes, via ubiquitination and subsequent proteasomal degradation of NFATC3. Collaborates with ATXN3 in the degradation of misfolded chaperone substrates: ATXN3 restricting the length of ubiquitin chain attached to STUB1/CHIP substrates and preventing further chain extension. Ubiquitinates NOS1 in concert with Hsp70 and Hsp40. Modulates the activity of several chaperone complexes, including Hsp70, Hsc70 and Hsp90. Ubiquitinates CHRNA3 targeting it for endoplasmic reticulum-associated degradation in cortical neurons, as part of the STUB1-VCP-UBXN2A complex. Ubiquitinates and promotes ESR1 proteasomal degradation in response to age-related circulating estradiol (17-beta-estradiol/E2) decline, thereby promotes neuronal apoptosis in response to ischemic reperfusion injury. Mediates transfer of non-canonical short ubiquitin chains to HSPA8 that have no effect on HSPA8 degradation. Mediates polyubiquitination of DNA polymerase beta (POLB) at 'Lys-41', 'Lys-61' and 'Lys-81', thereby playing a role in base-excision repair: catalyzes polyubiquitination by amplifying the HUWE1/ARF-BP1-dependent monoubiquitination and leading to POLB-degradation by the proteasome. Mediates polyubiquitination of CYP3A4. Ubiquitinates EPHA2 and may regulate the receptor stability and activity through proteasomal degradation. Acts as a co-chaperone for HSPA1A and HSPA1B chaperone proteins and promotes ubiquitin-mediated protein degradation. Negatively regulates the suppressive function of regulatory T-cells (Treg) during inflammation by mediating the ubiquitination and degradation of FOXP3 in a HSPA1A/B-dependent manner. Catalyzes monoubiquitination of SIRT6, preventing its degradation by the proteasome. Likely mediates polyubiquitination and down-regulates plasma membrane expression of PD-L1/CD274, an immune inhibitory ligand critical for immune tolerance to self and antitumor immunity. Negatively regulates TGF-beta signaling by modulating the basal level of SMAD3 via ubiquitin-mediated degradation. Plays a role in the degradation of TP53. Mediates ubiquitination of RIPK3 leading to its subsequent proteasome-dependent degradation. May regulate myosin assembly in striated muscles together with UBE4B and VCP/p97 by targeting myosin chaperone UNC45B for proteasomal degradation. Ubiquitinates PPARG in macrophages playing a role in M2 macrophages polarization and angiogenesis. This is E3 ubiquitin-protein ligase CHIP from Rattus norvegicus (Rat).